Reading from the N-terminus, the 421-residue chain is AP-3 complex subunit mu (421 aa).

Positions 178–420 (QNKIFFDIIE…TTKAGKFQVR (243 aa)) constitute an MHD domain.

Belongs to the adaptor complexes medium subunit family. Adaptor protein complex 3 (AP-3) is a heterotetramer composed of two large adaptins (delta-type subunit and beta-type subunit), a medium adaptin (mu-type subunit) and a small adaptin (sigma-type subunit).

The protein localises to the endosome membrane. Functionally, part of the AP-3 complex, an adaptor-related complex which is essential for the compartmentalization of the endocytic pathway. The chain is AP-3 complex subunit mu (apm3) from Dictyostelium discoideum (Social amoeba).